Reading from the N-terminus, the 437-residue chain is Protein farnesyltransferase subunit beta (437 aa).

5 PFTB repeats span residues 123-164, 174-215, 222-263, 270-312, and 332-374; these read ATDV…CIIG, REKL…SLTN, FEGT…VILK, LKSL…PLLH, and QQAL…SIAQ. (2E,6E)-farnesyl diphosphate contacts are provided by residues 248-251 and 291-294; these read HGGY and RCNK. 2 residues coordinate Zn(2+): aspartate 297 and cysteine 299. 300–303 provides a ligand contact to (2E,6E)-farnesyl diphosphate; the sequence is YSFW. Residue histidine 362 coordinates Zn(2+). Position 432 is a phosphoserine (serine 432). Threonine 436 carries the phosphothreonine modification.

Belongs to the protein prenyltransferase subunit beta family. Heterodimer of FNTA and FNTB. Zn(2+) is required as a cofactor.

It catalyses the reaction L-cysteinyl-[protein] + (2E,6E)-farnesyl diphosphate = S-(2E,6E)-farnesyl-L-cysteinyl-[protein] + diphosphate. In terms of biological role, essential subunit of the farnesyltransferase complex. Catalyzes the transfer of a farnesyl moiety from farnesyl diphosphate to a cysteine at the fourth position from the C-terminus of several proteins having the C-terminal sequence Cys-aliphatic-aliphatic-X. This is Protein farnesyltransferase subunit beta (Fntb) from Mus musculus (Mouse).